A 238-amino-acid polypeptide reads, in one-letter code: MNLMLITFNEFKTGISLNDTRAEHLVKILKLKDNDKFKFGILGEKNIYHCIYKKDKKLFFKKIFKVGESNKLKKLYVLIGMIRPIVAKRIIKELASIGTYKIIFFNTELTEKSYLNSKIFKNNDCEKHLIAGAMQGKITYLPKIKIIKNLKESLKYIQQENFEIKILLEKNSEKNLIDIEQINNAVIIVGPERGFTEKEKQLIAQYNFSPYSISTNTLRTETATIAASIITASKLINM.

This sequence belongs to the RNA methyltransferase RsmE family.

It is found in the cytoplasm. The catalysed reaction is uridine(1498) in 16S rRNA + S-adenosyl-L-methionine = N(3)-methyluridine(1498) in 16S rRNA + S-adenosyl-L-homocysteine + H(+). Functionally, specifically methylates the N3 position of the uracil ring of uridine 1498 (m3U1498) in 16S rRNA. Acts on the fully assembled 30S ribosomal subunit. This is Ribosomal RNA small subunit methyltransferase E 1 (rsmE1) from Borreliella burgdorferi (strain ATCC 35210 / DSM 4680 / CIP 102532 / B31) (Borrelia burgdorferi).